A 155-amino-acid chain; its full sequence is 3-hydroxyacyl-[acyl-carrier-protein] dehydratase FabZ (155 aa).

Histidine 57 is an active-site residue.

The protein belongs to the thioester dehydratase family. FabZ subfamily.

It localises to the cytoplasm. It carries out the reaction a (3R)-hydroxyacyl-[ACP] = a (2E)-enoyl-[ACP] + H2O. Its function is as follows. Involved in unsaturated fatty acids biosynthesis. Catalyzes the dehydration of short chain beta-hydroxyacyl-ACPs and long chain saturated and unsaturated beta-hydroxyacyl-ACPs. This chain is 3-hydroxyacyl-[acyl-carrier-protein] dehydratase FabZ, found in Cereibacter sphaeroides (strain ATCC 17025 / ATH 2.4.3) (Rhodobacter sphaeroides).